The sequence spans 501 residues: Aspartate--tRNA ligase, cytoplasmic (501 aa).

Residue threonine 52 is modified to Phosphothreonine. N6-acetyllysine is present on lysine 74. Glutamate 229 serves as a coordination point for L-aspartate. Phosphoserine is present on serine 249. Residues 251–254 form an aspartate region; sequence QLYK. Arginine 273 serves as a coordination point for L-aspartate. Residues 273-275 and 281-283 contribute to the ATP site; these read RAE and RHL. N6-acetyllysine is present on lysine 374. Residues 411–415 are binding site for the 3'-end of tRNA; it reads KQSNS. Glutamate 424 is an ATP binding site. Positions 427 and 431 each coordinate L-aspartate. 472-475 lines the ATP pocket; that stretch reads GLER. The residue at position 500 (threonine 500) is a Phosphothreonine; by PKA.

It belongs to the class-II aminoacyl-tRNA synthetase family. Type 2 subfamily. Homodimer. Part of a multisubunit complex that groups tRNA ligases for Arg (RARS1), Asp (DARS1), Gln (QARS1), Ile (IARS1), Leu (LARS1), Lys (KARS1), Met (MARS1) the bifunctional ligase for Glu and Pro (EPRS1) and the auxiliary subunits AIMP1/p43, AIMP2/p38 and EEF1E1/p18. In terms of tissue distribution, expression in the developing and adult brain shows similar patterns. Highly expressed in the ventricular and subventricular zones, including hippocampal subfields, the midlateral temporal cortex and the frontal polar cortex. The cerebellum, cerebral cortex, hippocampus, and lateral ventricle show preferential neuronal expression. Expression in the peripheral neurons is evident in the colon.

It localises to the cytoplasm. The protein localises to the cytosol. It catalyses the reaction tRNA(Asp) + L-aspartate + ATP = L-aspartyl-tRNA(Asp) + AMP + diphosphate. In terms of biological role, catalyzes the specific attachment of an amino acid to its cognate tRNA in a 2 step reaction: the amino acid (AA) is first activated by ATP to form AA-AMP and then transferred to the acceptor end of the tRNA. The polypeptide is Aspartate--tRNA ligase, cytoplasmic (Homo sapiens (Human)).